The sequence spans 365 residues: DNA replication and repair protein RecF (365 aa).

An ATP-binding site is contributed by 30-37; the sequence is GLNAQGKT.

It belongs to the RecF family.

The protein localises to the cytoplasm. Its function is as follows. The RecF protein is involved in DNA metabolism; it is required for DNA replication and normal SOS inducibility. RecF binds preferentially to single-stranded, linear DNA. It also seems to bind ATP. The protein is DNA replication and repair protein RecF of Chlamydia trachomatis serovar A (strain ATCC VR-571B / DSM 19440 / HAR-13).